Consider the following 410-residue polypeptide: Solute carrier family 52, riboflavin transporter, member 3 (410 aa).

3 consecutive transmembrane segments (helical) span residues isoleucine 3–leucine 23, leucine 40–leucine 60, and valine 73–leucine 93. Asparagine 157 is a glycosylation site (N-linked (GlcNAc...) asparagine). Helical transmembrane passes span phenylalanine 158–phenylalanine 178, phenylalanine 239–leucine 259, leucine 277–proline 297, leucine 301–methionine 321, alanine 334–valine 354, and alanine 369–phenylalanine 389.

This sequence belongs to the riboflavin transporter family.

Its subcellular location is the cell membrane. It carries out the reaction riboflavin(in) = riboflavin(out). In terms of biological role, plasma membrane transporter mediating the uptake by cells of the water soluble vitamin B2/riboflavin that plays a key role in biochemical oxidation-reduction reactions of the carbohydrate, lipid, and amino acid metabolism. The polypeptide is Solute carrier family 52, riboflavin transporter, member 3 (slc52a3) (Osmerus mordax (Rainbow smelt)).